The primary structure comprises 351 residues: Photosystem II D2 protein (351 aa).

Residues 39-59 (CAFLALGGWLTGTTFVTSWYT) traverse the membrane as a helical segment. A chlorophyll a-binding site is contributed by His116. A helical membrane pass occupies residues 123 to 139 (GFMLRQFEIARLVGIRP). Pheophytin a is bound by residues Gln128 and Asn141. Residues 151–164 (VFVSVFLMYPLGQS) form a helical membrane-spanning segment. His196 provides a ligand contact to chlorophyll a. The chain crosses the membrane as a helical span at residues 206–226 (GALLCAIHGATVENTLFEDGE). His213 and Phe260 together coordinate a plastoquinone. A Fe cation-binding site is contributed by His213. His267 is a binding site for Fe cation. A helical membrane pass occupies residues 277–293 (GLWMSAVGIVGLALNLR).

Belongs to the reaction center PufL/M/PsbA/D family. As to quaternary structure, PSII is composed of 1 copy each of membrane proteins PsbA, PsbB, PsbC, PsbD, PsbE, PsbF, PsbH, PsbI, PsbJ, PsbK, PsbL, PsbM, PsbT, PsbX, PsbY, PsbZ, Psb30/Ycf12, peripheral proteins PsbO, CyanoQ (PsbQ), PsbU, PsbV and a large number of cofactors. It forms dimeric complexes. It depends on The D1/D2 heterodimer binds P680, chlorophylls that are the primary electron donor of PSII, and subsequent electron acceptors. It shares a non-heme iron and each subunit binds pheophytin, quinone, additional chlorophylls, carotenoids and lipids. There is also a Cl(-1) ion associated with D1 and D2, which is required for oxygen evolution. The PSII complex binds additional chlorophylls, carotenoids and specific lipids. as a cofactor.

Its subcellular location is the cellular thylakoid membrane. The enzyme catalyses 2 a plastoquinone + 4 hnu + 2 H2O = 2 a plastoquinol + O2. In terms of biological role, photosystem II (PSII) is a light-driven water:plastoquinone oxidoreductase that uses light energy to abstract electrons from H(2)O, generating O(2) and a proton gradient subsequently used for ATP formation. It consists of a core antenna complex that captures photons, and an electron transfer chain that converts photonic excitation into a charge separation. The D1/D2 (PsbA/PsbD) reaction center heterodimer binds P680, the primary electron donor of PSII as well as several subsequent electron acceptors. D2 is needed for assembly of a stable PSII complex. The sequence is that of Photosystem II D2 protein from Trichormus variabilis (strain ATCC 29413 / PCC 7937) (Anabaena variabilis).